The primary structure comprises 886 residues: Pyruvate dehydrogenase E1 component (886 aa).

As to quaternary structure, homodimer. Part of the PDH complex, consisting of multiple copies of pyruvate dehydrogenase (E1), dihydrolipoamide acetyltransferase (E2) and lipoamide dehydrogenase (E3). The cofactor is thiamine diphosphate.

The catalysed reaction is N(6)-[(R)-lipoyl]-L-lysyl-[protein] + pyruvate + H(+) = N(6)-[(R)-S(8)-acetyldihydrolipoyl]-L-lysyl-[protein] + CO2. Functionally, component of the pyruvate dehydrogenase (PDH) complex, that catalyzes the overall conversion of pyruvate to acetyl-CoA and CO(2). The polypeptide is Pyruvate dehydrogenase E1 component (aceE) (Haemophilus influenzae (strain ATCC 51907 / DSM 11121 / KW20 / Rd)).